A 60-amino-acid chain; its full sequence is MAKIKITWVKSAIGYKFDQAATIKALGFKKLNQSVIQDDSAAIRGMILKVRHLVVLEEVT.

Belongs to the universal ribosomal protein uL30 family. In terms of assembly, part of the 50S ribosomal subunit.

In Dehalococcoides mccartyi (strain ATCC BAA-2266 / KCTC 15142 / 195) (Dehalococcoides ethenogenes (strain 195)), this protein is Large ribosomal subunit protein uL30.